Reading from the N-terminus, the 555-residue chain is Dynein regulatory complex protein 11 (555 aa).

2 IQ domains span residues 154-183 (EDEAILMIQKNERGRQARERARLAAITKRQ) and 199-226 (HEEAARKIQAAIRGFLWRRRIKKEADKE). 4 disordered regions span residues 232–255 (MKPKPRDPKRDPQMGEAKNLMRRK), 299–377 (KRNP…EQKI), 450–469 (AAKLGKKGKKKKGKKKEPFS), and 501–555 (AKKD…SCGA). 2 stretches are compositionally biased toward basic and acidic residues: residues 235–244 (KPRDPKRDPQ) and 338–367 (GDGKGKGKDGKGDAKKDAKKDPKKDKKGGG). Positions 452 to 464 (KLGKKGKKKKGKK) are enriched in basic residues. Over residues 501–521 (AKKDEKDAAGDGKGKGKDGKG) the composition is skewed to basic and acidic residues. The span at 537–546 (KKKKGGKKKS) shows a compositional bias: basic residues.

This sequence belongs to the AAA ATPase family. DRC11 subfamily. Component of the nexin-dynein regulatory complex (N-DRC). Interacts with DRC5.

Its subcellular location is the cytoplasm. It localises to the cytoskeleton. The protein localises to the flagellum axoneme. In terms of biological role, component of the nexin-dynein regulatory complex (N-DRC), a key regulator of ciliary/flagellar motility which maintains the alignment and integrity of the distal axoneme and regulates microtubule sliding in motile axonemes. This Chlamydomonas reinhardtii (Chlamydomonas smithii) protein is Dynein regulatory complex protein 11.